The primary structure comprises 156 residues: Ribosomal RNA large subunit methyltransferase H (156 aa).

S-adenosyl-L-methionine is bound by residues Leu73, Gly104, and 123–128 (LSALTL).

It belongs to the RNA methyltransferase RlmH family. As to quaternary structure, homodimer.

The protein localises to the cytoplasm. It carries out the reaction pseudouridine(1915) in 23S rRNA + S-adenosyl-L-methionine = N(3)-methylpseudouridine(1915) in 23S rRNA + S-adenosyl-L-homocysteine + H(+). Specifically methylates the pseudouridine at position 1915 (m3Psi1915) in 23S rRNA. This is Ribosomal RNA large subunit methyltransferase H from Vibrio parahaemolyticus serotype O3:K6 (strain RIMD 2210633).